Reading from the N-terminus, the 219-residue chain is MQIHAGPASRRGRRGPLARLSGPEATCNSRPAARGRQRAAAPRMPAPERPRSRRPQSQPGPGELCVKPRKIVFADELRPREPLHPEKHPRDLGPRLNPVPDYELKYPPVTNRRDRSRYAAVFQDQYGEFSELQREVGATQAKLQQLEALLLSLPPPRSQKEARMAAHVRREFEKKRVDPGFLDKQARCNYLKGKLRHLKAQIRKFDDQQDSNSEDSVYF.

The disordered stretch occupies residues 1–110; it reads MQIHAGPASR…DYELKYPPVT (110 aa). The segment covering 17–43 has biased composition (low complexity); the sequence is LARLSGPEATCNSRPAARGRQRAAAPR. Over residues 72–93 the composition is skewed to basic and acidic residues; sequence VFADELRPREPLHPEKHPRDLG. One can recognise an OCEL domain in the interval 100 to 210; it reads PDYELKYPPV…QIRKFDDQQD (111 aa).

It belongs to the ELL/occludin family.

This chain is Occludin/ELL domain-containing protein 1 (Ocel1), found in Mus musculus (Mouse).